Consider the following 903-residue polypeptide: HTH-type transcriptional regulator MalT (903 aa).

39-46 (CPAGYGKT) serves as a coordination point for ATP. An HTH luxR-type domain is found at 832–897 (ELIRTSPLTQ…DAVQQAQRLL (66 aa)). The H-T-H motif DNA-binding region spans 856-875 (NDQIAGELEVAATTIKTHIR).

Belongs to the MalT family. Monomer in solution. Oligomerizes to an active state in the presence of the positive effectors ATP and maltotriose.

Activated by ATP and maltotriose, which are both required for DNA binding. Functionally, positively regulates the transcription of the maltose regulon whose gene products are responsible for uptake and catabolism of malto-oligosaccharides. Specifically binds to the promoter region of its target genes, recognizing a short DNA motif called the MalT box. The polypeptide is HTH-type transcriptional regulator MalT (Yersinia enterocolitica serotype O:8 / biotype 1B (strain NCTC 13174 / 8081)).